Consider the following 151-residue polypeptide: Deoxyuridine 5'-triphosphate nucleotidohydrolase (151 aa).

Residues 70–72, N83, 87–89, and M97 contribute to the substrate site; these read RSG and LID.

The protein belongs to the dUTPase family. Requires Mg(2+) as cofactor.

The catalysed reaction is dUTP + H2O = dUMP + diphosphate + H(+). Its pathway is pyrimidine metabolism; dUMP biosynthesis; dUMP from dCTP (dUTP route): step 2/2. This enzyme is involved in nucleotide metabolism: it produces dUMP, the immediate precursor of thymidine nucleotides and it decreases the intracellular concentration of dUTP so that uracil cannot be incorporated into DNA. This chain is Deoxyuridine 5'-triphosphate nucleotidohydrolase, found in Pseudomonas fluorescens (strain Pf0-1).